Reading from the N-terminus, the 248-residue chain is tRNA (guanine-N(1)-)-methyltransferase (248 aa).

Residues glycine 117 and 137 to 142 contribute to the S-adenosyl-L-methionine site; that span reads IGDFVL.

This sequence belongs to the RNA methyltransferase TrmD family. As to quaternary structure, homodimer.

The protein resides in the cytoplasm. The enzyme catalyses guanosine(37) in tRNA + S-adenosyl-L-methionine = N(1)-methylguanosine(37) in tRNA + S-adenosyl-L-homocysteine + H(+). Its function is as follows. Specifically methylates guanosine-37 in various tRNAs. The chain is tRNA (guanine-N(1)-)-methyltransferase from Polynucleobacter necessarius subsp. necessarius (strain STIR1).